The primary structure comprises 359 residues: Heat-inducible transcription repressor HrcA (359 aa).

Belongs to the HrcA family.

Negative regulator of class I heat shock genes (grpE-dnaK-dnaJ and groELS operons). Prevents heat-shock induction of these operons. This Sinorhizobium fredii (strain NBRC 101917 / NGR234) protein is Heat-inducible transcription repressor HrcA.